Reading from the N-terminus, the 418-residue chain is Actin-related protein 3 (418 aa).

The residue at position 2 (alanine 2) is an N-acetylalanine.

The protein belongs to the actin family. ARP3 subfamily. In terms of assembly, component of the Arp2/3 complex composed of ACTR2/ARP2, ACTR3/ARP3, ARPC1B/p41-ARC, ARPC2/p34-ARC, ARPC3/p21-ARC, ARPC4/p20-ARC and ARPC5/p16-ARC. In terms of tissue distribution, detected in fibroblasts.

The protein resides in the cytoplasm. It is found in the cytoskeleton. It localises to the cell projection. The protein localises to the nucleus. In terms of biological role, ATP-binding component of the Arp2/3 complex, a multiprotein complex that mediates actin polymerization upon stimulation by nucleation-promoting factor (NPF). The Arp2/3 complex mediates the formation of branched actin networks in the cytoplasm, providing the force for cell motility. Seems to contact the pointed end of the daughter actin filament. In addition to its role in the cytoplasmic cytoskeleton, the Arp2/3 complex also promotes actin polymerization in the nucleus, thereby regulating gene transcription and repair of damaged DNA. The Arp2/3 complex promotes homologous recombination (HR) repair in response to DNA damage by promoting nuclear actin polymerization, leading to drive motility of double-strand breaks (DSBs). The sequence is that of Actin-related protein 3 (ACTR3) from Gallus gallus (Chicken).